The chain runs to 147 residues: Large ribosomal subunit protein bL9 (147 aa).

The protein belongs to the bacterial ribosomal protein bL9 family.

Functionally, binds to the 23S rRNA. The protein is Large ribosomal subunit protein bL9 of Helicobacter hepaticus (strain ATCC 51449 / 3B1).